We begin with the raw amino-acid sequence, 105 residues long: ENTATVVVDERTDNGDGNFNYNFQTSNGIEDTKTGTPGSQGQSNMQGTFRFLLPDGTTAEVRYVADEFGYRPESPLLPVGPELPPHVHELLRIAEEQRAQGITFE.

Residues 16 to 81 enclose the Chitin-binding type R&amp;R domain; the sequence is DGNFNYNFQT…PESPLLPVGP (66 aa). The segment at 25 to 46 is disordered; sequence TSNGIEDTKTGTPGSQGQSNMQ.

In terms of tissue distribution, arthrodial membrane.

This Cancer pagurus (Rock crab) protein is Cuticle protein AM1159.